We begin with the raw amino-acid sequence, 100 residues long: MKLTPREKDKLLIFTAALLAERRRARGLKLNYPEAVAFITAALMEAARDGKTVAEVMHYGTTLLTRDDVMEGVPEMIPDIQVEATFPDGTKLVTVHHPIP.

The protein belongs to the urease gamma subunit family. Heterotrimer of UreA (gamma), UreB (beta) and UreC (alpha) subunits. Three heterotrimers associate to form the active enzyme.

It localises to the cytoplasm. The catalysed reaction is urea + 2 H2O + H(+) = hydrogencarbonate + 2 NH4(+). It participates in nitrogen metabolism; urea degradation; CO(2) and NH(3) from urea (urease route): step 1/1. The polypeptide is Urease subunit gamma (Burkholderia multivorans (strain ATCC 17616 / 249)).